The chain runs to 1187 residues: DNA-directed RNA polymerase subunit beta (1187 aa).

The protein belongs to the RNA polymerase beta chain family. As to quaternary structure, the RNAP catalytic core consists of 2 alpha, 1 beta, 1 beta' and 1 omega subunit. When a sigma factor is associated with the core the holoenzyme is formed, which can initiate transcription.

It catalyses the reaction RNA(n) + a ribonucleoside 5'-triphosphate = RNA(n+1) + diphosphate. Its function is as follows. DNA-dependent RNA polymerase catalyzes the transcription of DNA into RNA using the four ribonucleoside triphosphates as substrates. This chain is DNA-directed RNA polymerase subunit beta, found in Streptococcus mutans serotype c (strain ATCC 700610 / UA159).